An 87-amino-acid chain; its full sequence is Probable Fe(2+)-trafficking protein (87 aa).

It belongs to the Fe(2+)-trafficking protein family.

Its function is as follows. Could be a mediator in iron transactions between iron acquisition and iron-requiring processes, such as synthesis and/or repair of Fe-S clusters in biosynthetic enzymes. The polypeptide is Probable Fe(2+)-trafficking protein (Francisella tularensis subsp. holarctica (strain FTNF002-00 / FTA)).